The sequence spans 109 residues: MAERKQGGQGNGVGSSVVTEVKPKTQKPSLYRVLILNDDYTPMEFVVYVLERFFNKSREDATRIMLHVHQNGVGVCGVYTYEVAETKVAQVIDSARRHQHPLQCTMEKD.

The disordered stretch occupies residues 1–20 (MAERKQGGQGNGVGSSVVTE).

This sequence belongs to the ClpS family. As to quaternary structure, binds to the N-terminal domain of the chaperone ClpA.

Functionally, involved in the modulation of the specificity of the ClpAP-mediated ATP-dependent protein degradation. In Caulobacter vibrioides (strain NA1000 / CB15N) (Caulobacter crescentus), this protein is ATP-dependent Clp protease adapter protein ClpS.